Consider the following 568-residue polypeptide: Periplasmic trehalase (568 aa).

The first 39 residues, 1–39 (MPYATARSGDVMSSAAPPCCTSLLGLSLSMFVAPGTLTA), serve as a signal peptide directing secretion. Substrate contacts are provided by residues R169, 176–177 (WD), N213, 222–224 (RSQ), 294–296 (RPE), and G327. Residues D329 and E511 each act as proton donor/acceptor in the active site. E526 serves as a coordination point for substrate.

Belongs to the glycosyl hydrolase 37 family.

Its subcellular location is the periplasm. The enzyme catalyses alpha,alpha-trehalose + H2O = alpha-D-glucose + beta-D-glucose. Provides the cells with the ability to utilize trehalose at high osmolarity by splitting it into glucose molecules that can subsequently be taken up by the phosphotransferase-mediated uptake system. The chain is Periplasmic trehalase from Xanthomonas axonopodis pv. citri (strain 306).